The following is a 580-amino-acid chain: Cyclin-K (580 aa).

The tract at residues 262 to 580 (KQQMPHHTPH…GGLGRAAWMR (319 aa)) is disordered. Low complexity-rich tracts occupy residues 263-277 (QQMP…QQPP) and 285-321 (VPQV…QQPK). Residues Ser-324, Ser-328, Ser-329, and Ser-340 each carry the phosphoserine modification. Residues 377-386 (PLAAALGEAE) show a composition bias toward low complexity. The segment covering 400–426 (QIPPPAHPAPVHQPPPLPHRPPPPPPS) has biased composition (pro residues). Over residues 427–444 (SYMTGMSTTSSYMSGEGY) the composition is skewed to low complexity. The segment covering 477 to 568 (VYPPNPPPPP…PPPIPPPGMP (92 aa)) has biased composition (pro residues).

It belongs to the cyclin family. Cyclin C subfamily. Regulatory subunit of cyclin-dependent kinases. Identified in a complex with a kinase and the RNA polymerase II holoenzyme. Interacts with POLR2A. Interacts with CDK12 and CDK13. Interacts with CDK9 according to PubMed:10574912; does not interact with CDK9 according to PubMed:22012619. As to quaternary structure, (Microbial infection) Interacts with human herpes virus 1 (HHV-1) transcriptional regulator ICP22. In terms of tissue distribution, widely expressed. Highest levels in testis.

Its subcellular location is the nucleus. In terms of biological role, regulatory subunit of cyclin-dependent kinases that mediates activation of target kinases. Plays a role in transcriptional regulation via its role in regulating the phosphorylation of the C-terminal domain (CTD) of the large subunit of RNA polymerase II (POLR2A). This chain is Cyclin-K (CCNK), found in Homo sapiens (Human).